A 739-amino-acid chain; its full sequence is Phosphoribosylformylglycinamidine synthase subunit PurL (739 aa).

Residue His53 is part of the active site. ATP is bound by residues Tyr56 and Lys95. Glu97 provides a ligand contact to Mg(2+). Substrate contacts are provided by residues 98-101 (SHNH) and Arg120. Residue His99 is the Proton acceptor of the active site. Asp121 is a binding site for Mg(2+). Gln244 lines the substrate pocket. Asp274 serves as a coordination point for Mg(2+). Residue 318 to 320 (ESQ) participates in substrate binding. Asp501 and Gly538 together coordinate ATP. Asn539 serves as a coordination point for Mg(2+). Ser541 contributes to the substrate binding site.

Belongs to the FGAMS family. In terms of assembly, monomer. Part of the FGAM synthase complex composed of 1 PurL, 1 PurQ and 2 PurS subunits.

It localises to the cytoplasm. It catalyses the reaction N(2)-formyl-N(1)-(5-phospho-beta-D-ribosyl)glycinamide + L-glutamine + ATP + H2O = 2-formamido-N(1)-(5-O-phospho-beta-D-ribosyl)acetamidine + L-glutamate + ADP + phosphate + H(+). It functions in the pathway purine metabolism; IMP biosynthesis via de novo pathway; 5-amino-1-(5-phospho-D-ribosyl)imidazole from N(2)-formyl-N(1)-(5-phospho-D-ribosyl)glycinamide: step 1/2. Part of the phosphoribosylformylglycinamidine synthase complex involved in the purines biosynthetic pathway. Catalyzes the ATP-dependent conversion of formylglycinamide ribonucleotide (FGAR) and glutamine to yield formylglycinamidine ribonucleotide (FGAM) and glutamate. The FGAM synthase complex is composed of three subunits. PurQ produces an ammonia molecule by converting glutamine to glutamate. PurL transfers the ammonia molecule to FGAR to form FGAM in an ATP-dependent manner. PurS interacts with PurQ and PurL and is thought to assist in the transfer of the ammonia molecule from PurQ to PurL. This is Phosphoribosylformylglycinamidine synthase subunit PurL from Listeria welshimeri serovar 6b (strain ATCC 35897 / DSM 20650 / CCUG 15529 / CIP 8149 / NCTC 11857 / SLCC 5334 / V8).